The following is a 339-amino-acid chain: DNA-directed RNA polymerase subunit alpha (339 aa).

Residues 1–233 are alpha N-terminal domain (alpha-NTD); that stretch reads MVREEVAGST…DLFLPFLHAE (233 aa). Residues 264-339 are alpha C-terminal domain (alpha-CTD); it reads KKGIPLNCIF…IDLLKNKLSF (76 aa).

The protein belongs to the RNA polymerase alpha chain family. As to quaternary structure, in plastids the minimal PEP RNA polymerase catalytic core is composed of four subunits: alpha, beta, beta', and beta''. When a (nuclear-encoded) sigma factor is associated with the core the holoenzyme is formed, which can initiate transcription.

The protein localises to the plastid. Its subcellular location is the chloroplast. The enzyme catalyses RNA(n) + a ribonucleoside 5'-triphosphate = RNA(n+1) + diphosphate. In terms of biological role, DNA-dependent RNA polymerase catalyzes the transcription of DNA into RNA using the four ribonucleoside triphosphates as substrates. This chain is DNA-directed RNA polymerase subunit alpha, found in Aegilops uniaristata (Goatgrass).